A 474-amino-acid polypeptide reads, in one-letter code: Sestrin homolog (474 aa).

The protein belongs to the sestrin family.

It localises to the nucleus. Its subcellular location is the cytoplasm. May function as a negative feedback regulator of TOR function. The chain is Sestrin homolog from Caenorhabditis elegans.